The primary structure comprises 295 residues: Iron-sulfur cluster carrier protein (295 aa).

38–45 contacts ATP; sequence GKGGVGKS.

Belongs to the Mrp/NBP35 ATP-binding proteins family. In terms of assembly, homodimer.

Functionally, binds and transfers iron-sulfur (Fe-S) clusters to target apoproteins. Can hydrolyze ATP. The protein is Iron-sulfur cluster carrier protein of Pyrococcus horikoshii (strain ATCC 700860 / DSM 12428 / JCM 9974 / NBRC 100139 / OT-3).